Consider the following 130-residue polypeptide: MAQSRRVEKVAALIRKEMSELLSNGIRDQRVNTTMITITEVEVSGDLQHCKIFVSIYGNEIQKDEVFSGLEASQSFLKGELGRRLQMRRAPEVVFKLDRGMEKGISVLNLLEKLEAERNIKDKKLIEFQE.

The protein belongs to the RbfA family. In terms of assembly, monomer. Binds 30S ribosomal subunits, but not 50S ribosomal subunits or 70S ribosomes.

Its subcellular location is the cytoplasm. Functionally, one of several proteins that assist in the late maturation steps of the functional core of the 30S ribosomal subunit. Associates with free 30S ribosomal subunits (but not with 30S subunits that are part of 70S ribosomes or polysomes). Required for efficient processing of 16S rRNA. May interact with the 5'-terminal helix region of 16S rRNA. The polypeptide is Ribosome-binding factor A (Prochlorococcus marinus (strain SARG / CCMP1375 / SS120)).